The primary structure comprises 198 residues: NAD(P)H dehydrogenase (quinone) (198 aa).

The Flavodoxin-like domain maps to 4–189 (VLVLYYSMYG…SIARYQGEYV (186 aa)). FMN contacts are provided by residues 10–15 (SMYGHI) and 78–80 (TRF). Position 12 (Tyr-12) interacts with NAD(+). A substrate-binding site is contributed by Trp-98. Residues 113–118 (STGTGG) and His-133 contribute to the FMN site.

Belongs to the WrbA family. FMN is required as a cofactor.

The catalysed reaction is a quinone + NADH + H(+) = a quinol + NAD(+). It catalyses the reaction a quinone + NADPH + H(+) = a quinol + NADP(+). This Escherichia coli (strain SE11) protein is NAD(P)H dehydrogenase (quinone).